A 334-amino-acid polypeptide reads, in one-letter code: Holliday junction branch migration complex subunit RuvB (334 aa).

The tract at residues 1–181 is large ATPase domain (RuvB-L); sequence MHDRLISGTE…FGIVQRLEFY (181 aa). ATP is bound by residues isoleucine 20, arginine 21, glycine 62, lysine 65, threonine 66, threonine 67, 128–130, arginine 171, tyrosine 181, and arginine 218; that span reads EDY. Position 66 (threonine 66) interacts with Mg(2+). Residues 182-252 are small ATPAse domain (RuvB-S); the sequence is SVEDLTHIVT…MAQRALDMLN (71 aa). The interval 255–334 is head domain (RuvB-H); the sequence is KDGLDTLDRR…FGLTPPEPKN (80 aa). 2 residues coordinate DNA: arginine 310 and arginine 315.

The protein belongs to the RuvB family. In terms of assembly, homohexamer. Forms an RuvA(8)-RuvB(12)-Holliday junction (HJ) complex. HJ DNA is sandwiched between 2 RuvA tetramers; dsDNA enters through RuvA and exits via RuvB. An RuvB hexamer assembles on each DNA strand where it exits the tetramer. Each RuvB hexamer is contacted by two RuvA subunits (via domain III) on 2 adjacent RuvB subunits; this complex drives branch migration. In the full resolvosome a probable DNA-RuvA(4)-RuvB(12)-RuvC(2) complex forms which resolves the HJ.

It localises to the cytoplasm. The enzyme catalyses ATP + H2O = ADP + phosphate + H(+). The RuvA-RuvB-RuvC complex processes Holliday junction (HJ) DNA during genetic recombination and DNA repair, while the RuvA-RuvB complex plays an important role in the rescue of blocked DNA replication forks via replication fork reversal (RFR). RuvA specifically binds to HJ cruciform DNA, conferring on it an open structure. The RuvB hexamer acts as an ATP-dependent pump, pulling dsDNA into and through the RuvAB complex. RuvB forms 2 homohexamers on either side of HJ DNA bound by 1 or 2 RuvA tetramers; 4 subunits per hexamer contact DNA at a time. Coordinated motions by a converter formed by DNA-disengaged RuvB subunits stimulates ATP hydrolysis and nucleotide exchange. Immobilization of the converter enables RuvB to convert the ATP-contained energy into a lever motion, pulling 2 nucleotides of DNA out of the RuvA tetramer per ATP hydrolyzed, thus driving DNA branch migration. The RuvB motors rotate together with the DNA substrate, which together with the progressing nucleotide cycle form the mechanistic basis for DNA recombination by continuous HJ branch migration. Branch migration allows RuvC to scan DNA until it finds its consensus sequence, where it cleaves and resolves cruciform DNA. This chain is Holliday junction branch migration complex subunit RuvB, found in Acinetobacter baylyi (strain ATCC 33305 / BD413 / ADP1).